The primary structure comprises 430 residues: tRNA(Ile)-lysidine synthase (430 aa).

24 to 29 (SGGLDS) is a binding site for ATP.

Belongs to the tRNA(Ile)-lysidine synthase family.

Its subcellular location is the cytoplasm. The catalysed reaction is cytidine(34) in tRNA(Ile2) + L-lysine + ATP = lysidine(34) in tRNA(Ile2) + AMP + diphosphate + H(+). Ligates lysine onto the cytidine present at position 34 of the AUA codon-specific tRNA(Ile) that contains the anticodon CAU, in an ATP-dependent manner. Cytidine is converted to lysidine, thus changing the amino acid specificity of the tRNA from methionine to isoleucine. The sequence is that of tRNA(Ile)-lysidine synthase from Haemophilus influenzae (strain 86-028NP).